Consider the following 166-residue polypeptide: Cytochrome b (166 aa).

4 consecutive transmembrane segments (helical) span residues 15 to 35, 77 to 97, 109 to 129, and 136 to 156; these read FKDI…VLIN, LGGV…PFYN, INQI…WIGA, and YVLL…INPL.

The protein belongs to the cytochrome b family. In terms of assembly, the main subunits of complex b-c1 are: cytochrome b, cytochrome c1 and the Rieske protein. Heme is required as a cofactor.

The protein localises to the mitochondrion inner membrane. In terms of biological role, component of the ubiquinol-cytochrome c reductase complex (complex III or cytochrome b-c1 complex) that is part of the mitochondrial respiratory chain. The b-c1 complex mediates electron transfer from ubiquinol to cytochrome c. Contributes to the generation of a proton gradient across the mitochondrial membrane that is then used for ATP synthesis. In Drosophila subobscura (Fruit fly), this protein is Cytochrome b (mt:Cyt-b).